Here is a 316-residue protein sequence, read N- to C-terminus: Transaldolase 2 (316 aa).

K131 (schiff-base intermediate with substrate) is an active-site residue.

Belongs to the transaldolase family. Type 1 subfamily. In terms of assembly, homodimer.

It is found in the cytoplasm. It catalyses the reaction D-sedoheptulose 7-phosphate + D-glyceraldehyde 3-phosphate = D-erythrose 4-phosphate + beta-D-fructose 6-phosphate. The protein operates within carbohydrate degradation; pentose phosphate pathway; D-glyceraldehyde 3-phosphate and beta-D-fructose 6-phosphate from D-ribose 5-phosphate and D-xylulose 5-phosphate (non-oxidative stage): step 2/3. Transaldolase is important for the balance of metabolites in the pentose-phosphate pathway. This Salmonella paratyphi A (strain ATCC 9150 / SARB42) protein is Transaldolase 2.